The chain runs to 527 residues: Heat shock factor protein HSF8 (527 aa).

Residues Met1 to Val13 are compositionally biased toward low complexity. Disordered regions lie at residues Met1–Asn37, Arg130–Ser160, Asn243–Gln275, Ser300–Lys343, and Gln476–Gly501. Positions Gln25–Asn37 are enriched in pro residues. A DNA-binding region spans residues Pro39 to Pro133. Residues Gly136–His157 are compositionally biased toward low complexity. Polar residues-rich tracts occupy residues Ser319 to Arg328 and Asn491 to Gly501.

This sequence belongs to the HSF family. Homotrimer. Exhibits temperature-dependent phosphorylation.

The protein resides in the nucleus. DNA-binding protein that specifically binds heat shock promoter elements (HSE) and activates transcription. The chain is Heat shock factor protein HSF8 (HSF8) from Solanum peruvianum (Peruvian tomato).